Here is a 491-residue protein sequence, read N- to C-terminus: Eupatolide synthase (491 aa).

Residues 7-27 (LPSWLLPAVVILTISCILMLW) form a helical; Signal-anchor for type II membrane protein membrane-spanning segment. Cys-430 contributes to the heme binding site.

This sequence belongs to the cytochrome P450 family. Heme is required as a cofactor. Expressed in leaf primordia.

It localises to the membrane. The catalysed reaction is 8beta-hydroxygermacra-1(10),4,11(13)-trien-12-oate + reduced [NADPH--hemoprotein reductase] + O2 = eupatolide + oxidized [NADPH--hemoprotein reductase] + 2 H2O. It participates in secondary metabolite biosynthesis; terpenoid biosynthesis. Involved in the biosynthesis of germacrene-derived sesquiterpene lactones. Hydroxylates 8-beta-hydroxy-germacrene A acid to 6-alpha,8-beta-hydroxy-germacrene A acid, which, in turn, undergo spontaneous lactonization to become eupatolide. The protein is Eupatolide synthase of Helianthus annuus (Common sunflower).